The following is a 316-amino-acid chain: KRR1 small subunit processome component (316 aa).

The KH domain occupies 122–192; the sequence is ACDVIKIGNF…VRRVVEDCMK (71 aa). The span at 279 to 304 shows a compositional bias: basic and acidic residues; it reads KKLNEQKEKQMEREIERQEERAKDFI. Positions 279–316 are disordered; it reads KKLNEQKEKQMEREIERQEERAKDFIAPEEEAYKPNQN.

The protein belongs to the KRR1 family. In terms of assembly, component of the ribosomal small subunit (SSU) processome composed of at least 40 protein subunits and snoRNA U3. Interacts with snoRNA U3. Interacts with MPP10, KRI1 and with ribosomal proteins RPS1A, RPS4A, RPS4B, RPS8A, RPS8B, RPS11A, RPS11B, RPS13, RPS24, RPS25, RPL4A, RPL7B, RPL8, RPL23, RPL25 and RPL28.

Its subcellular location is the nucleus. The protein localises to the nucleolus. Required for 40S ribosome biogenesis. Involved in nucleolar processing of pre-18S ribosomal RNA and ribosome assembly. Essential for vegetative growth. In Saccharomyces cerevisiae (strain RM11-1a) (Baker's yeast), this protein is KRR1 small subunit processome component.